Here is a 101-residue protein sequence, read N- to C-terminus: Putative UPF0377 protein YBL108W (101 aa).

The protein belongs to the UPF0377 family.

This is Putative UPF0377 protein YBL108W from Saccharomyces cerevisiae (strain ATCC 204508 / S288c) (Baker's yeast).